A 109-amino-acid chain; its full sequence is Spermidine export protein MdtI (109 aa).

The next 4 helical transmembrane spans lie at tryptophan 6–leucine 26, valine 36–valine 56, alanine 64–phenylalanine 84, and leucine 88–leucine 108.

It belongs to the drug/metabolite transporter (DMT) superfamily. Small multidrug resistance (SMR) (TC 2.A.7.1) family. MdtI subfamily. In terms of assembly, forms a complex with MdtJ.

It is found in the cell inner membrane. Functionally, catalyzes the excretion of spermidine. This Klebsiella pneumoniae (strain 342) protein is Spermidine export protein MdtI.